A 25-amino-acid chain; its full sequence is Toxin Tpa3 (25 aa).

It belongs to the non-disulfide-bridged peptide (NDBP) superfamily. In terms of tissue distribution, expressed by the venom gland.

The protein localises to the secreted. Its function is as follows. Unknown. Is not toxic to mammals. The protein is Toxin Tpa3 of Tityus pachyurus (Colombian scorpion).